An 80-amino-acid chain; its full sequence is D-alanyl carrier protein 1 (80 aa).

Residues 1 to 80 (MTMDDTKATV…KIVAKVENLQ (80 aa)) form the Carrier domain. Residue Ser38 is modified to O-(pantetheine 4'-phosphoryl)serine.

It belongs to the DltC family. In terms of processing, 4'-phosphopantetheine is transferred from CoA to a specific serine of apo-DCP.

It localises to the cytoplasm. It functions in the pathway cell wall biogenesis; lipoteichoic acid biosynthesis. Its function is as follows. Carrier protein involved in the D-alanylation of lipoteichoic acid (LTA). The loading of thioester-linked D-alanine onto DltC is catalyzed by D-alanine--D-alanyl carrier protein ligase DltA. The DltC-carried D-alanyl group is further transferred to cell membrane phosphatidylglycerol (PG) by forming an ester bond, probably catalyzed by DltD. D-alanylation of LTA plays an important role in modulating the properties of the cell wall in Gram-positive bacteria, influencing the net charge of the cell wall. The polypeptide is D-alanyl carrier protein 1 (Lactiplantibacillus plantarum (strain ATCC BAA-793 / NCIMB 8826 / WCFS1) (Lactobacillus plantarum)).